The chain runs to 430 residues: F-box protein At1g49990 (430 aa).

The F-box domain maps to 1–45 (METGRRRTIPEVEILARLPLRSIARFKSVCKRWKSVIESDYFRRL).

The protein is F-box protein At1g49990 of Arabidopsis thaliana (Mouse-ear cress).